The sequence spans 525 residues: G-protein regulator 2 (525 aa).

One can recognise a GoLoco domain in the interval 424 to 445 (PVDMMDLIFSMSSRMDDQRTEL). Positions 489-525 (TMNRILKRSKKSKSSLDSTNSIQGDDTRSDDVTMTSK) are disordered.

In terms of assembly, interacts with gpr-1; gpr-1 forms a complex with lin-5 and GDP-bound goa-1.

It localises to the cytoplasm. The protein resides in the cell cortex. Its subcellular location is the cytoskeleton. It is found in the spindle. Its function is as follows. In the 1-cell embryo, probably together with gpr-1, controls nuclear rotation and spindle elongation during mitosis. Complex of gpr-1 and gpr-2, in association with lin-5, activates G-protein signaling to affect mitotic spindle force. Polarity determinants (par genes) may regulate lin-5/gpr-1/gpr-2/goa-1 locally to create the asymmetric forces that drive spindle movement. The polypeptide is G-protein regulator 2 (gpr-2) (Caenorhabditis elegans).